Reading from the N-terminus, the 509-residue chain is MPGNREEFDIEKVLKSKKLEAIETSTEKKAPYTVFESTDKLLLIIVLSLVGFWSAISSPIYFPALPTLTKYFNTTPSVMNISVVAYLIFQGIAPTISSNLADTFGRRPVILGSIIVFCAVCIAISQTNVYWLLALLRCFQAAGIAPVFAISSGVAGDICTPANRGGMVGAVSGLQLAGNGIGGLVGAALISGFHTWRAIFIFLAIGGGVTFIFAFLVLAETSRRIVGNGSIRPKNVLNKAVLIYLPHFKNKITNDYSTLQPKGPFDILGPFKIFFQKEVFCTLLPSGMHFAAWTVSLTSLSTELESAKYNYSVMKVGLVYLPQGIACFIGSLIAGRCLNWYYRYRKNLYDKQMNDVPLNDRPPFNLVASRLTLTIVPLAMMVIGLSAFGWCLEYKKPIISIIISTILISFSASVMMSICTTMLVDLYPKQSGASASCVNLMRCWLAALFTGVLDKIISALGLGGTYTLLTGICLLTDLGLVYVLYTANQRFVNYVSPNQTAVNSDAEDY.

The Cytoplasmic segment spans residues 1–41 (MPGNREEFDIEKVLKSKKLEAIETSTEKKAPYTVFESTDKL). A helical transmembrane segment spans residues 42–62 (LLIIVLSLVGFWSAISSPIYF). Over 63-75 (PALPTLTKYFNTT) the chain is Extracellular. A helical transmembrane segment spans residues 76-96 (PSVMNISVVAYLIFQGIAPTI). The Cytoplasmic segment spans residues 97-106 (SSNLADTFGR). The helical transmembrane segment at 107–129 (RPVILGSIIVFCAVCIAISQTNV) threads the bilayer. The Extracellular portion of the chain corresponds to 130-132 (YWL). Residues 133–155 (LALLRCFQAAGIAPVFAISSGVA) form a helical membrane-spanning segment. At 156 to 169 (GDICTPANRGGMVG) the chain is on the cytoplasmic side. Residues 170–190 (AVSGLQLAGNGIGGLVGAALI) traverse the membrane as a helical segment. Over 191–197 (SGFHTWR) the chain is Extracellular. A helical membrane pass occupies residues 198–218 (AIFIFLAIGGGVTFIFAFLVL). Over 219-278 (AETSRRIVGNGSIRPKNVLNKAVLIYLPHFKNKITNDYSTLQPKGPFDILGPFKIFFQKE) the chain is Cytoplasmic. Residues 279-299 (VFCTLLPSGMHFAAWTVSLTS) form a helical membrane-spanning segment. Residues 300–312 (LSTELESAKYNYS) lie on the Extracellular side of the membrane. Residues 313–333 (VMKVGLVYLPQGIACFIGSLI) form a helical membrane-spanning segment. Over 334–370 (AGRCLNWYYRYRKNLYDKQMNDVPLNDRPPFNLVASR) the chain is Cytoplasmic. Residues 371–391 (LTLTIVPLAMMVIGLSAFGWC) traverse the membrane as a helical segment. At 392–397 (LEYKKP) the chain is on the extracellular side. A helical membrane pass occupies residues 398–418 (IISIIISTILISFSASVMMSI). At 419-432 (CTTMLVDLYPKQSG) the chain is on the cytoplasmic side. Residues 433–453 (ASASCVNLMRCWLAALFTGVL) traverse the membrane as a helical segment. At 454–455 (DK) the chain is on the extracellular side. A helical membrane pass occupies residues 456-476 (IISALGLGGTYTLLTGICLLT). The Cytoplasmic segment spans residues 477–509 (DLGLVYVLYTANQRFVNYVSPNQTAVNSDAEDY).

Belongs to the major facilitator superfamily. CAR1 family.

The protein localises to the cell membrane. MFS antiporter that does not display functional linkage as drug transporter and performs functions that significantly affect biofilm development and virulence. No substrate for transport has been identified yet, but plays an important role in the growth in the host. In Candida albicans (strain SC5314 / ATCC MYA-2876) (Yeast), this protein is MFS antiporter QDR1 (QDR).